We begin with the raw amino-acid sequence, 179 residues long: uncharacterized protein (179 aa).

The Rhodanese domain occupies 21–109 (QQDAVILVDV…WKQAGLPTVK (89 aa)). A run of 2 helical transmembrane segments spans residues 115–135 (ISIMRQVQIIAGSLVLTGVLL) and 138–158 (FVAPGFYFLSGFVGAGLLFAG).

The protein localises to the cell membrane. This is an uncharacterized protein from Synechocystis sp. (strain ATCC 27184 / PCC 6803 / Kazusa).